We begin with the raw amino-acid sequence, 83 residues long: Small ribosomal subunit protein uS17 (83 aa).

It belongs to the universal ribosomal protein uS17 family. Part of the 30S ribosomal subunit.

In terms of biological role, one of the primary rRNA binding proteins, it binds specifically to the 5'-end of 16S ribosomal RNA. The sequence is that of Small ribosomal subunit protein uS17 from Francisella tularensis subsp. holarctica (strain FTNF002-00 / FTA).